The chain runs to 986 residues: MPGVARLPLLLGLLLLPRPGRPLDLADYTYDLAEEDDSEPLNYKDPCKAAAFLGDIALDEEDLRAFQVQQAVDLRRHTARKSSIKAAVPGNTSTPSCQSTNGQPQRGACGRWRGRSRSRRAATSRPERVWPDGVIPFVIGGNFTGSQRAVFRQAMRHWEKHTCVTFLERTDEDSYIVFTYRPCGCCSYVGRRGGGPQAISIGKNCDKFGIVVHELGHVVGFWHEHTRPDRDRHVSIVRENIQPGQEYNFLKMEPQEVESLGETYDFDSIMHYARNTFSRGIFLDTIVPKYEVNGVKPPIGQRTRLSKGDIAQARKLYKCPACGETLQDSTGNFSSPEYPNGYSAHMHCVWRISVTPGEKIILNFTSLDLYRSRLCWYDYVEVRDGFWRKAPLRGRFCGSKLPEPIVSTDSRLWVEFRSSSNWVGKGFFAVYEAICGGDVKKDYGHIQSPNYPDDYRPSKVCIWRIQVSEGFHVGLTFQSFEIERHDSCAYDYLEVRDGHSESSTLIGRYCGYEKPDDIKSTSSRLWLKFVSDGSINKAGFAVNFFKEVDECSRPNRGGCEQRCLNTLGSYKCSCDPGYELAPDKRRCEAACGGFLTKLNGSITSPGWPKEYPPNKNCIWQLVAPTQYRISLQFDFFETEGNDVCKYDFVEVRSGLTADSKLHGKFCGSEKPEVITSQYNNMRVEFKSDNTVSKKGFKAHFFSDKDECSKDNGGCQQDCVNTFGSYECQCRSGFVLHDNKHDCKEAGCDHKVTSTSGTITSPNWPDKYPSKKECTWAISSTPGHRVKLTFMEMDIESQPECAYDHLEVFDGRDAKAPVLGRFCGSKKPEPVLATGSRMFLRFYSDNSVQRKGFQASHATECGGQVRADVKTKDLYSHAQFGDNNYPGGVDCEWVIVAEEGYGVELVFQTFEVEEETDCGYDYMELFDGYDSTAPRLGRYCGSGPPEEVYSAGDSVLVKFHSDDTITKKGFHLRYTSTKFQDTLHSRK.

Residues 1–22 form the signal peptide; the sequence is MPGVARLPLLLGLLLLPRPGRP. A propeptide spanning residues 23–120 is cleaved from the precursor; the sequence is LDLADYTYDL…RWRGRSRSRR (98 aa). Residues 83-125 are disordered; it reads SIKAAVPGNTSTPSCQSTNGQPQRGACGRWRGRSRSRRAATSR. The span at 90–104 shows a compositional bias: polar residues; it reads GNTSTPSCQSTNGQP. N-linked (GlcNAc...) asparagine glycosylation is present at Asn-91. Residues 112-122 show a composition bias toward basic residues; it reads WRGRSRSRRAA. Positions 121–320 constitute a Peptidase M12A domain; that stretch reads AATSRPERVW…AQARKLYKCP (200 aa). N-linked (GlcNAc...) asparagine glycosylation occurs at Asn-142. Cystine bridges form between Cys-163/Cys-319, Cys-183/Cys-205, Cys-185/Cys-186, and Cys-322/Cys-348. Zn(2+) is bound at residue His-213. Glu-214 is an active-site residue. Residues His-217 and His-223 each contribute to the Zn(2+) site. CUB domains are found at residues 322–434 and 435–546; these read CGET…YEAI and CGGD…NFFK. Asn-332 and Asn-363 each carry an N-linked (GlcNAc...) asparagine glycan. 15 cysteine pairs are disulfide-bonded: Cys-375–Cys-397, Cys-435–Cys-461, Cys-488–Cys-510, Cys-551–Cys-563, Cys-559–Cys-572, Cys-574–Cys-587, Cys-591–Cys-617, Cys-644–Cys-666, Cys-707–Cys-718, Cys-714–Cys-727, Cys-729–Cys-742, Cys-747–Cys-773, Cys-800–Cys-822, Cys-860–Cys-890, and Cys-917–Cys-939. The EGF-like 1; calcium-binding domain occupies 547 to 588; it reads EVDECSRPNRGGCEQRCLNTLGSYKCSCDPGYELAPDKRRCE. The 113-residue stretch at 591-703 folds into the CUB 3 domain; sequence CGGFLTKLNG…KGFKAHFFSD (113 aa). A glycan (N-linked (GlcNAc...) asparagine) is linked at Asn-599. Residues 704–743 enclose the EGF-like 2; calcium-binding domain; that stretch reads KDECSKDNGGCQQDCVNTFGSYECQCRSGFVLHDNKHDCK. CUB domains are found at residues 747 to 859 and 860 to 976; these read CDHK…HATE and CGGQ…YTST. Omega-N-methylarginine is present on residues Arg-934 and Arg-937.

As to quaternary structure, interacts with POSTN, the interaction promotes deposition on the extracellular matrix. Zn(2+) serves as cofactor. Proteolytically activated in the trans-Golgi network by furin-like/paired basic proprotein convertases, cleavage is not required for secretion. As to expression, ubiquitous.

The protein localises to the golgi apparatus. It is found in the trans-Golgi network. Its subcellular location is the secreted. It localises to the extracellular space. The protein resides in the extracellular matrix. It catalyses the reaction Cleavage of the C-terminal propeptide at Ala-|-Asp in type I and II procollagens and at Arg-|-Asp in type III.. Activity is increased by the procollagen C-endopeptidase enhancer protein. Functionally, metalloprotease that plays key roles in regulating the formation of the extracellular matrix (ECM) via processing of various precursor proteins into mature functional enzymes or structural proteins. Thereby participates in several developmental and physiological processes such as cartilage and bone formation, muscle growth and homeostasis, wound healing and tissue repair. Roles in ECM formation include cleavage of the C-terminal propeptides from procollagens such as procollagen I, II and III or the proteolytic activation of the enzyme lysyl oxidase LOX, necessary to formation of covalent cross-links in collagen and elastic fibers. Additional substrates include matricellular thrombospondin-1/THBS1 whose cleavage leads to cell adhesion disruption and TGF-beta activation. Plays an important role in bone repair by acting as a coactivator of BMP7. This Homo sapiens (Human) protein is Bone morphogenetic protein 1 (BMP1).